We begin with the raw amino-acid sequence, 124 residues long: Conotoxin Cl14.12 (124 aa).

An N-terminal signal peptide occupies residues 1–17 (MKVAVVLLVSLLAVTYA). A propeptide spanning residues 18–74 (LPEKRIFFGGIVDKVKDTFTKIFNKAKETFDKITDGFDVDFDEVVDKLIAQIHSTPT) is cleaved from the precursor.

Contains 2 disulfide bond. Expressed by the venom duct.

Its subcellular location is the secreted. The protein is Conotoxin Cl14.12 of Californiconus californicus (California cone).